The chain runs to 157 residues: Class 10 plant pathogenesis-related protein 2F (157 aa).

Residue D8 participates in trans-zeatin binding. Residues P32, V35, and I38 each contribute to the Ca(2+) site. Positions 60, 69, 81, and 83 each coordinate trans-zeatin.

Belongs to the BetVI family.

It localises to the cytoplasm. The protein resides in the cytosol. Functionally, class II ribonuclease (RNase). Binds to cytokinins. Interacts with melatonin. In Lupinus luteus (European yellow lupine), this protein is Class 10 plant pathogenesis-related protein 2F.